The chain runs to 1279 residues: ATP-dependent helicase/nuclease subunit A (1279 aa).

The UvrD-like helicase ATP-binding domain maps to 4–499 (TKWTDEQRQA…VKLFKNFRSR (496 aa)). 25 to 32 (AGAGAGKT) lines the ATP pocket. The UvrD-like helicase C-terminal domain occupies 526–853 (EEALKVGASY…RIMSIHKSKG (328 aa)).

It belongs to the helicase family. AddA subfamily. As to quaternary structure, heterodimer of AddA and AddB/RexB. It depends on Mg(2+) as a cofactor.

It carries out the reaction Couples ATP hydrolysis with the unwinding of duplex DNA by translocating in the 3'-5' direction.. It catalyses the reaction ATP + H2O = ADP + phosphate + H(+). Its function is as follows. The heterodimer acts as both an ATP-dependent DNA helicase and an ATP-dependent, dual-direction single-stranded exonuclease. Recognizes the chi site generating a DNA molecule suitable for the initiation of homologous recombination. The AddA nuclease domain is required for chi fragment generation; this subunit has the helicase and 3' -&gt; 5' nuclease activities. The protein is ATP-dependent helicase/nuclease subunit A of Clostridium botulinum (strain Langeland / NCTC 10281 / Type F).